A 787-amino-acid chain; its full sequence is MNKKSLSTLEFYKITDQLVSYACCDGAKKILRNLKPMTDITDINLRLNETNDALSRIFQKGTVDFSQTKDIRASVARLKVGSSLNISELLNISAILSCAKHVKDYYEHREDSISGMLENLATVDALNSQIKKCIISEDEISDDASSNLRSIRRSKSIANDRIHSELNKLLNSPTYRTYLQDYVITTRQGRYCLPVKAEYKSAFPGMIHDQSSTGSTLFIEPAAVVKLNNDIRELELKEAAEIEVILADLSAKAGEHTEELLCDYEILVELDCIFAKAQLARHMHASRPVMNTSGIINIKKGRHPLIESHTVVPIDIYLGTDFKLLIITGPNTGGKTVSLKTVGLLTLMAQSGLFIPALDHSDIAVFKNIYADIGDEQSIEQSLSTFSSHMTNTVKILKEADENCLVLFDEIGAGTDPTEGAALAIAILNDLKMRGVTTMATTHYSEIKLYALSTEGVENASCEFDVESLRPTYRLLIGIPGKSNAFAISKKLGLPDYILSDASERLNAEDVHFEDIVSDLEHARISLEKEQAEVESYKAEIASLKEKLQAKNERLDERTDNIIRKANEQAAAILKDAKDFADETIKAMNKHGMTVAELEKHRTAVREKMNKNQAKLKVEPAKVKAHKAHDISEFKTGMHVKVLTMNVSGTVSAIHPAKKQVTVQVGALSTKIDIKNLEILSDYKEPKEAPSKAAGGSGKIKMSKSAGISTEINLLGCTVDEAVARLDKYLDDAYIARIPQVRIVHGKGTGALRNGVTAYLRGVPYIKSFRLGEIGEGDAGVTIVDFK.

An ATP-binding site is contributed by 329–336 (GPNTGGKT). The Smr domain occupies 712–787 (INLLGCTVDE…DAGVTIVDFK (76 aa)).

It belongs to the DNA mismatch repair MutS family. MutS2 subfamily. In terms of assembly, homodimer. Binds to stalled ribosomes, contacting rRNA.

In terms of biological role, endonuclease that is involved in the suppression of homologous recombination and thus may have a key role in the control of bacterial genetic diversity. Acts as a ribosome collision sensor, splitting the ribosome into its 2 subunits. Detects stalled/collided 70S ribosomes which it binds and splits by an ATP-hydrolysis driven conformational change. Acts upstream of the ribosome quality control system (RQC), a ribosome-associated complex that mediates the extraction of incompletely synthesized nascent chains from stalled ribosomes and their subsequent degradation. Probably generates substrates for RQC. The polypeptide is Endonuclease MutS2 (Lachnospira eligens (strain ATCC 27750 / DSM 3376 / VPI C15-48 / C15-B4) (Eubacterium eligens)).